The following is a 361-amino-acid chain: Polygalacturonase (361 aa).

The first 18 residues, 1–18 (MISANSLLISTLCAFAIA), serve as a signal peptide directing secretion. An intrachain disulfide couples C27 to C43. 5 PbH1 repeats span residues 155–185 (CSDLTISDITIDIRDGDSAGGHNTDGFDVGS), 186–207 (SSNVLIQGCTVYNQDDCIAVNS), 208–228 (GSTIKFMNNYCYNGHGISVGS), 237–258 (VNGFWAENNHVINSDNGLRIKT), and 266–288 (VTNVNFISNKISGIKSYGIVIEG). Catalysis depends on D200, which acts as the Proton donor. Residues C202 and C218 are joined by a disulfide bond. Residue H222 is part of the active site. N-linked (GlcNAc...) asparagine glycans are attached at residues N318 and N330. A disulfide bridge links C350 with C361.

Belongs to the glycosyl hydrolase 28 family.

It catalyses the reaction (1,4-alpha-D-galacturonosyl)n+m + H2O = (1,4-alpha-D-galacturonosyl)n + (1,4-alpha-D-galacturonosyl)m.. In Saccharomyces cerevisiae (strain ATCC 204508 / S288c) (Baker's yeast), this protein is Polygalacturonase (PGU1).